A 487-amino-acid chain; its full sequence is Variant surface glycoprotein WRATAT B (487 aa).

Positions methionine 1–alanine 19 are cleaved as a signal peptide. Asparagine 71, asparagine 84, asparagine 418, and asparagine 465 each carry an N-linked (GlcNAc...) asparagine glycan. Residues lysine 443–glycine 468 form a disordered region. Serine 470 carries GPI-anchor amidated serine lipidation. A propeptide spans asparagine 471–phenylalanine 487 (removed in mature form).

Its subcellular location is the cell membrane. VSG forms a coat on the surface of the parasite. The trypanosome evades the immune response of the host by expressing a series of antigenically distinct VSGs from an estimated 1000 VSG genes. The sequence is that of Variant surface glycoprotein WRATAT B from Trypanosoma brucei rhodesiense.